The sequence spans 340 residues: Protein-arginine kinase (340 aa).

Positions 21 to 242 (VVLSSRIRLA…EQIIMQERVA (222 aa)) constitute a Phosphagen kinase C-terminal domain. ATP is bound by residues 24–28 (SSRIR), H79, R113, 164–168 (RASVM), and 195–200 (RGIYGE).

This sequence belongs to the ATP:guanido phosphotransferase family.

It carries out the reaction L-arginyl-[protein] + ATP = N(omega)-phospho-L-arginyl-[protein] + ADP + H(+). In terms of biological role, catalyzes the specific phosphorylation of arginine residues in proteins. This Listeria monocytogenes serovar 1/2a (strain ATCC BAA-679 / EGD-e) protein is Protein-arginine kinase.